Consider the following 247-residue polypeptide: tRNA pseudouridine synthase A (247 aa).

The active-site Nucleophile is the aspartate 52. Tyrosine 111 contributes to the substrate binding site.

It belongs to the tRNA pseudouridine synthase TruA family. In terms of assembly, homodimer.

The catalysed reaction is uridine(38/39/40) in tRNA = pseudouridine(38/39/40) in tRNA. Its function is as follows. Formation of pseudouridine at positions 38, 39 and 40 in the anticodon stem and loop of transfer RNAs. This is tRNA pseudouridine synthase A from Erythrobacter litoralis (strain HTCC2594).